We begin with the raw amino-acid sequence, 140 residues long: Probable transport accessory protein MmpS4 (140 aa).

A helical transmembrane segment spans residues 2–22 (LMRTWIPLVILVVVIVGGFTV).

The protein belongs to the MmpS family.

It localises to the cell membrane. The polypeptide is Probable transport accessory protein MmpS4 (mmpS4) (Mycobacterium bovis (strain ATCC BAA-935 / AF2122/97)).